A 237-amino-acid chain; its full sequence is Ras-related protein RABA3 (237 aa).

35–42 (GDSAVGKT) contacts GTP. The Effector region motif lies at 57–65 (SKSTIGVEF). GTP contacts are provided by residues 83–87 (DTAGQ), 141–144 (NKAD), and 172–173 (SA). Residues C235 and C237 are each lipidated (S-geranylgeranyl cysteine). C237 carries the post-translational modification Cysteine methyl ester.

It belongs to the small GTPase superfamily. Rab family. As to expression, expressed in root tips.

It is found in the endosome membrane. It localises to the golgi apparatus. The protein localises to the trans-Golgi network membrane. Functionally, intracellular vesicle trafficking and protein transport. The protein is Ras-related protein RABA3 (RABA3) of Arabidopsis thaliana (Mouse-ear cress).